The following is a 180-amino-acid chain: FMN reductase (NADH) RutF (180 aa).

The protein belongs to the non-flavoprotein flavin reductase family. RutF subfamily.

It carries out the reaction FMNH2 + NAD(+) = FMN + NADH + 2 H(+). Functionally, catalyzes the reduction of FMN to FMNH2 which is used to reduce pyrimidine by RutA via the Rut pathway. This chain is FMN reductase (NADH) RutF, found in Variovorax paradoxus (strain S110).